The primary structure comprises 493 residues: C2H2-type transcription factor ffmA (493 aa).

Residues 1 to 18 (MPMPQYTMQPQYPVSQPH) show a composition bias toward low complexity. 3 disordered regions span residues 1 to 50 (MPMP…SRYP), 68 to 140 (TTVG…YPDG), and 164 to 202 (EPPR…KNTT). Polar residues-rich tracts occupy residues 69–79 (TVGSLPPSTFL) and 192–202 (NGVNGTAKNTT). Residues 212-234 (FPCPHCNKTYLHAKHLKRHLLRH) form a C2H2-type 1 zinc finger. The segment at 240–265 (YMCVLCKDTFSRSDILKRHFQKCSIR) adopts a C2H2-type 2; degenerate zinc-finger fold. Composition is skewed to polar residues over residues 288–307 (QAAA…TVPP) and 484–493 (ASTTLGGDGK). 2 disordered regions span residues 288–316 (QAAA…GATF) and 468–493 (TTTA…GDGK).

Belongs to the krueppel C2H2-type zinc-finger protein family.

Its subcellular location is the nucleus. Functionally, transcription factor that acts in coordination with atrR to regulate the expression of the ABC-type multidrug transporter abcG1 and thus plays a role in azole susceptibility. Regulates the expression of genes involved in fermentation. Is able to promote expression from the yeast FLO11 promoter. The sequence is that of C2H2-type transcription factor ffmA from Aspergillus fumigatus (strain CBS 144.89 / FGSC A1163 / CEA10) (Neosartorya fumigata).